Here is a 546-residue protein sequence, read N- to C-terminus: MAAKDVKFGDSARSKMVAGVNILADAVKVTLGPKGRNVVLDRSFGAPTITKDGVSVAKEIELKDKFENMGAQMVKEVASKTSDVAGDGTTTATVLAQAIVQEGMKFVAAGMNPMDLKRGIDKAVVSLVGEIAKIAKPCATSKEIAQVGSISANSDSDIGEIIANAMEKVGKEGVITVEDGKSLNNELDVVEGMQFDRGYLSPYFINNQDKQIAALDNPFILLFDKKISNIRDLLPVLEQVAKSGRPLLIIAEDVEGEALATLVVNTIRGILKVVAVKAPGFGDRRKAMLTDIAVLTGGEVIAEEVGLTLEKATLDQLGQAKRVEVGKENTTIIDGAGEAATIQARVGEIRKQIEEATSDYDREKLQERVAKLAGGVAVIKVGAATEVEMKEKKARVEDALHATRAAVEEGVVPGGGVALLRARATLENLKTDNAEQEAGVKIVLRAIEAPLRQIVKNAGDEPSVVVNKVLEGKGNFGYNAASGEYGDMLEMGVLDPAKVTRSALQHAASVAGLMLTTDCMIAELPEDKPAAGMPDMGGMGGMGGMM.

ATP contacts are provided by residues 30 to 33, Lys-51, 87 to 91, Gly-415, 479 to 481, and Asp-495; these read TLGP, DGTTT, and NAA.

This sequence belongs to the chaperonin (HSP60) family. Forms a cylinder of 14 subunits composed of two heptameric rings stacked back-to-back. Interacts with the co-chaperonin GroES.

The protein resides in the cytoplasm. The enzyme catalyses ATP + H2O + a folded polypeptide = ADP + phosphate + an unfolded polypeptide.. In terms of biological role, together with its co-chaperonin GroES, plays an essential role in assisting protein folding. The GroEL-GroES system forms a nano-cage that allows encapsulation of the non-native substrate proteins and provides a physical environment optimized to promote and accelerate protein folding. This Chromobacterium violaceum (strain ATCC 12472 / DSM 30191 / JCM 1249 / CCUG 213 / NBRC 12614 / NCIMB 9131 / NCTC 9757 / MK) protein is Chaperonin GroEL 2.